The following is a 304-amino-acid chain: HPr kinase/phosphorylase (304 aa).

Active-site residues include His-136 and Lys-157. 151-158 (GESGIGKS) lines the ATP pocket. Position 158 (Ser-158) interacts with Mg(2+). The active-site Proton acceptor; for phosphorylation activity. Proton donor; for dephosphorylation activity is the Asp-175. Positions 198–207 (LEVRGMGIID) are important for the catalytic mechanism of both phosphorylation and dephosphorylation. Glu-199 serves as a coordination point for Mg(2+). Residue Arg-240 is part of the active site. The segment at 261 to 266 (PIRPGR) is important for the catalytic mechanism of dephosphorylation.

This sequence belongs to the HPrK/P family. As to quaternary structure, homohexamer. Mg(2+) is required as a cofactor.

The enzyme catalyses [HPr protein]-L-serine + ATP = [HPr protein]-O-phospho-L-serine + ADP + H(+). It carries out the reaction [HPr protein]-O-phospho-L-serine + phosphate + H(+) = [HPr protein]-L-serine + diphosphate. In terms of biological role, catalyzes the ATP- as well as the pyrophosphate-dependent phosphorylation of a specific serine residue in HPr, a phosphocarrier protein of the phosphoenolpyruvate-dependent sugar phosphotransferase system (PTS). HprK/P also catalyzes the pyrophosphate-producing, inorganic phosphate-dependent dephosphorylation (phosphorolysis) of seryl-phosphorylated HPr (P-Ser-HPr). The two antagonistic activities of HprK/P are regulated by several intracellular metabolites, which change their concentration in response to the absence or presence of rapidly metabolisable carbon sources (glucose, fructose, etc.) in the growth medium. Therefore, by controlling the phosphorylation state of HPr, HPrK/P is a sensor enzyme that plays a major role in the regulation of carbon metabolism and sugar transport: it mediates carbon catabolite repression (CCR), and regulates PTS-catalyzed carbohydrate uptake and inducer exclusion. In Clostridium acetobutylicum (strain ATCC 824 / DSM 792 / JCM 1419 / IAM 19013 / LMG 5710 / NBRC 13948 / NRRL B-527 / VKM B-1787 / 2291 / W), this protein is HPr kinase/phosphorylase.